The sequence spans 236 residues: Probable fimbrial chaperone EcpE (236 aa).

An N-terminal signal peptide occupies residues 1–27 (MFRRRGVTLTKALLTVVCMLAAPLTQA).

This sequence belongs to the EcpB/EcpE family.

Its function is as follows. Part of the ecpRABCDE operon, which encodes the E.coli common pilus (ECP). ECP is found in both commensal and pathogenic strains and plays a dual role in early-stage biofilm development and host cell recognition. The sequence is that of Probable fimbrial chaperone EcpE (ecpE) from Escherichia coli O18:K1:H7 (strain IHE3034 / ExPEC).